The chain runs to 171 residues: Calcium channel flower homolog (171 aa).

Over methionine 1–arginine 31 the chain is Cytoplasmic. A helical transmembrane segment spans residues leucine 32–isoleucine 52. Residues histidine 53–asparagine 56 lie on the Extracellular side of the membrane. The chain crosses the membrane as a helical span at residues isoleucine 57–phenylalanine 77. Topologically, residues cysteine 78–alanine 101 are cytoplasmic. Residues valine 102–leucine 122 form a helical membrane-spanning segment. The Extracellular portion of the chain corresponds to glycine 123–asparagine 124. A helical transmembrane segment spans residues alanine 125–lysine 141. Topologically, residues lysine 142–leucine 171 are cytoplasmic.

This sequence belongs to the calcium channel flower family. In terms of assembly, interacts with adaptor protein complex 2 (AP-2). Expressed in neurons in the brain (at protein level). Expressed in neuroblastoma cell lines (at protein level). Expressed in cytotoxic T-lymphoocytes (at protein level). In terms of tissue distribution, low levels of expression in various tissues including the brain, eye, heart, liver and colon. Expression in the heart is at slightly higher levels than isoform 3. Expressed in skin cells. As to expression, very low levels of expression in the brain, liver and eye. Detected at very low levels of expression in skin cells. Expressed in various tissues, with highest levels of expression in the brain and eye. Expressed in skin cells. Low levels of expression in the liver, colon, heart and spleen. In terms of tissue distribution, barely detected in the brain and liver.

It is found in the cell membrane. The protein resides in the vesicle. In terms of biological role, transmembrane protein which mediates synaptic endocytosis and fitness-based cell culling. In response to different stimulus strengths, controls two major modes of synaptic vesicle (SV) retrieval in hippocampal neurons; Clathrin-mediated endocytosis (CME) in response to mild stimulation and activity-dependent bulk endocytosis (ADBE) in response to strong stimulation. In cytotoxic T-lymphoocytes (CTLs) facilitates calcium-dependent endocytosis of cytotoxic granules (CGs) at the immuno synapse. Different isoforms work as fitness fingerprints in 'loser' and 'winner' cells and thereby mediate win/lose decisions as part of the cell competition process. This Mus musculus (Mouse) protein is Calcium channel flower homolog (Cacfd1).